A 382-amino-acid chain; its full sequence is D-galactonate dehydratase (382 aa).

D183 lines the Mg(2+) pocket. H185 acts as the Proton donor in catalysis. Residues E209 and E235 each coordinate Mg(2+). The active-site Proton acceptor is H285. The interval N361–W382 is disordered.

It belongs to the mandelate racemase/muconate lactonizing enzyme family. GalD subfamily. It depends on Mg(2+) as a cofactor.

It catalyses the reaction D-galactonate = 2-dehydro-3-deoxy-D-galactonate + H2O. It participates in carbohydrate acid metabolism; D-galactonate degradation; D-glyceraldehyde 3-phosphate and pyruvate from D-galactonate: step 1/3. Functionally, catalyzes the dehydration of D-galactonate to 2-keto-3-deoxy-D-galactonate. The polypeptide is D-galactonate dehydratase (Xanthomonas axonopodis pv. citri (strain 306)).